Reading from the N-terminus, the 226-residue chain is Ribonuclease 3 (226 aa).

In terms of domain architecture, RNase III spans 7–129; that stretch reads DARLQQALGY…LFGAVFLDAG (123 aa). Residue Glu42 coordinates Mg(2+). Residue Asp46 is part of the active site. Residues Asp115 and Glu118 each coordinate Mg(2+). Glu118 is an active-site residue. Residues 156–226 form the DRBM domain; that stretch reads DPKTRLQEIL…ARQACAELQR (71 aa).

Belongs to the ribonuclease III family. Homodimer. It depends on Mg(2+) as a cofactor.

The protein resides in the cytoplasm. It catalyses the reaction Endonucleolytic cleavage to 5'-phosphomonoester.. Digests double-stranded RNA. Involved in the processing of primary rRNA transcript to yield the immediate precursors to the large and small rRNAs (23S and 16S). Processes some mRNAs, and tRNAs when they are encoded in the rRNA operon. Processes pre-crRNA and tracrRNA of type II CRISPR loci if present in the organism. This Thiobacillus denitrificans (strain ATCC 25259 / T1) protein is Ribonuclease 3.